The chain runs to 394 residues: Acid ceramidase (394 aa).

A signal peptide spans 1 to 18; the sequence is MRGQSLLTWVLAAAVTCA. Cysteines 30 and 339 form a disulfide. Cys142 acts as the Nucleophile in catalysis. Asn172, Asn194, Asn258, Asn341, and Asn347 each carry an N-linked (GlcNAc...) asparagine glycan. Residues Cys387 and Cys391 are joined by a disulfide bond.

It belongs to the acid ceramidase family. As to quaternary structure, heterodimer; disulfide-linked. The heterodimer is composed of the disulfide-linked alpha and beta chains produced by autocatalytic cleavage of the precursor. N-glycosylated. In terms of processing, proteolytically cleaved into two chains alpha and beta that remain associated via a disulfide bond. Cleavage gives rise to a conformation change that activates the enzyme. The same catalytic Cys residue mediates the autoproteolytic cleavage and subsequent hydrolysis of lipid substrates. The beta chain may undergo an additional C-terminal processing. In terms of tissue distribution, widely expressed.

It localises to the lysosome. The protein localises to the secreted. It catalyses the reaction an N-acylsphing-4-enine + H2O = sphing-4-enine + a fatty acid. It carries out the reaction N-dodecanoylsphing-4-enine + H2O = dodecanoate + sphing-4-enine. The catalysed reaction is N-(9Z-octadecenoyl)-sphing-4-enine + H2O = sphing-4-enine + (9Z)-octadecenoate. The enzyme catalyses N-tetradecanoylsphing-4-enine + H2O = tetradecanoate + sphing-4-enine. It catalyses the reaction N-hexadecanoylsphing-4-enine + H2O = sphing-4-enine + hexadecanoate. It carries out the reaction N-octadecanoylsphing-4-enine + H2O = sphing-4-enine + octadecanoate. The catalysed reaction is N-dodecanoyl-(4R)-hydroxysphinganine + H2O = (4R)-hydroxysphinganine + dodecanoate. The enzyme catalyses N-(dodecanoyl)-sphinganine + H2O = dodecanoate + sphinganine. It catalyses the reaction N-(acetyl)-sphing-4-enine + H2O = sphing-4-enine + acetate. It carries out the reaction N-(hexanoyl)sphing-4-enine + H2O = hexanoate + sphing-4-enine. The catalysed reaction is N-octanoylsphing-4-enine + H2O = octanoate + sphing-4-enine. The enzyme catalyses N-dodecanoylethanolamine + H2O = dodecanoate + ethanolamine. Its pathway is lipid metabolism; sphingolipid metabolism. In terms of biological role, lysosomal ceramidase that hydrolyzes sphingolipid ceramides into sphingosine and free fatty acids at acidic pH. Ceramides, sphingosine, and its phosphorylated form sphingosine-1-phosphate are bioactive lipids that mediate cellular signaling pathways regulating several biological processes including cell proliferation, apoptosis and differentiation. Has a higher catalytic efficiency towards C12-ceramides versus other ceramides. Also catalyzes the reverse reaction allowing the synthesis of ceramides from fatty acids and sphingosine. For the reverse synthetic reaction, the natural sphingosine D-erythro isomer is more efficiently utilized as a substrate compared to D-erythro-dihydrosphingosine and D-erythro-phytosphingosine, while the fatty acids with chain lengths of 12 or 14 carbons are the most efficiently used. Also has an N-acylethanolamine hydrolase activity. By regulating the levels of ceramides, sphingosine and sphingosine-1-phosphate in the epidermis, mediates the calcium-induced differentiation of epidermal keratinocytes. Also indirectly regulates tumor necrosis factor/TNF-induced apoptosis. By regulating the intracellular balance between ceramides and sphingosine, in adrenocortical cells, probably also acts as a regulator of steroidogenesis. The sequence is that of Acid ceramidase from Mus musculus (Mouse).